Here is a 500-residue protein sequence, read N- to C-terminus: UDP-N-acetylmuramoylalanine--D-glutamate ligase (500 aa).

111–117 serves as a coordination point for ATP; the sequence is GTNGKST. Residues 260 to 306 form the RPE3 insert domain; the sequence is DISFELQHNSESFRQDEFQGEPAEPECIKIREHRQDLQNSLVSSFMH.

Belongs to the MurCDEF family.

It is found in the cytoplasm. The catalysed reaction is UDP-N-acetyl-alpha-D-muramoyl-L-alanine + D-glutamate + ATP = UDP-N-acetyl-alpha-D-muramoyl-L-alanyl-D-glutamate + ADP + phosphate + H(+). Its pathway is cell wall biogenesis; peptidoglycan biosynthesis. Functionally, cell wall formation. Catalyzes the addition of glutamate to the nucleotide precursor UDP-N-acetylmuramoyl-L-alanine (UMA). In Rickettsia conorii (strain ATCC VR-613 / Malish 7), this protein is UDP-N-acetylmuramoylalanine--D-glutamate ligase (murD).